The chain runs to 148 residues: Cysteine-rich venom protein VAR6 (148 aa).

An N-terminal signal peptide occupies residues 1-22; the sequence is MILLKLYLTLAAILCQSRGTTS. The SCP domain occupies 41–140; that stretch reads NKHNDLRRTV…AGVMVGHYTQ (100 aa).

This sequence belongs to the CRISP family. In terms of processing, contains 8 disulfide bonds. In terms of tissue distribution, expressed by the venom gland.

It is found in the secreted. In terms of biological role, blocks ryanodine receptors, and potassium channels. This chain is Cysteine-rich venom protein VAR6, found in Varanus acanthurus (Ridge-tailed monitor).